A 479-amino-acid polypeptide reads, in one-letter code: Glutamate receptor U1 (479 aa).

A signal peptide spans 1-17 (MEKSLLFLFAVTLLSVG). At 18 to 163 (CTDAGESKGS…LFGFLTPFSK (146 aa)) the chain is on the extracellular side. N-linked (GlcNAc...) asparagine glycosylation is present at Asn79. Residues 164-184 (ETWIGILVAYMVTSLCLFLVG) traverse the membrane as a helical segment. The Cytoplasmic segment spans residues 185–229 (RLSPCEWTELSTEQNNFTFLNSLWFGAGAFTLQGAEPHPKSVSAR). A helical membrane pass occupies residues 230–250 (IIAVIWWIFSIVLVAAYIASF). The Extracellular segment spans residues 251-414 (AAFLNSDSVQ…AGWNPVQPHT (164 aa)). N-linked (GlcNAc...) asparagine glycosylation occurs at Asn282. A helical transmembrane segment spans residues 415 to 435 (LGGIFLILGIGLALGVIAALI). Residues 436-479 (ELVLKARNNADQQKKSCCSAFSEEMGERLGTNKENQGAVDSVKS) lie on the Cytoplasmic side of the membrane.

It belongs to the glutamate-gated ion channel (TC 1.A.10.1) family. In terms of assembly, homomeric.

It is found in the cell membrane. Its subcellular location is the postsynaptic cell membrane. In terms of biological role, receptor for glutamate. L-glutamate acts as an excitatory neurotransmitter at many synapses in the central nervous system. The postsynaptic actions of Glu are mediated by a variety of receptors that are named according to their selective agonists. This receptor binds domoate &gt; kainate &gt; AMPA &gt; NBQX &gt; glutamate. The chain is Glutamate receptor U1 (kbp) from Xenopus laevis (African clawed frog).